Here is a 134-residue protein sequence, read N- to C-terminus: Replication enhancer protein (134 aa).

Belongs to the geminiviridae replication enhancer protein family. Homooligomer. Interacts with the replication-associated protein (REP). Interacts with host proliferating cell nuclear antigen (PCNA). Interacts with host retinoblastoma-related protein 1 (RBR1), and may thereby deregulate the host cell cycle. Oligomerization and interaction with PCNA are necessary for optimal replication enhancement.

Functionally, increases viral DNA accumulation. Enhances infectivity and symptom expression. The protein is Replication enhancer protein of Solanum lycopersicum (Tomato).